A 90-amino-acid polypeptide reads, in one-letter code: Barrier-to-autointegration factor-like protein (90 aa).

It belongs to the BAF family. As to quaternary structure, homodimer. Heterodimerizes with BANF1. Expressed strongly in testis and pancreas. Also detected in brain, colon, liver, lung, ovary, placenta, prostate, small intestine, spleen and thymus. Not detected in heart, kidney and skeletal muscle.

It is found in the nucleus. It localises to the cytoplasm. Functionally, may play a role in BANF1 regulation and influence tissue-specific roles of BANF1. In Homo sapiens (Human), this protein is Barrier-to-autointegration factor-like protein (BANF2).